The primary structure comprises 145 residues: Arginine repressor (145 aa).

It belongs to the ArgR family.

The protein localises to the cytoplasm. It participates in amino-acid biosynthesis; L-arginine biosynthesis [regulation]. Regulates arginine biosynthesis genes. The polypeptide is Arginine repressor (Streptococcus equi subsp. zooepidemicus (strain H70)).